A 158-amino-acid polypeptide reads, in one-letter code: Cyclic pyranopterin monophosphate synthase (158 aa).

Residues 76 to 78 (MCH) and 114 to 115 (ME) contribute to the substrate site. Asp-129 is a catalytic residue.

It belongs to the MoaC family. Homohexamer; trimer of dimers.

The catalysed reaction is (8S)-3',8-cyclo-7,8-dihydroguanosine 5'-triphosphate = cyclic pyranopterin phosphate + diphosphate. It functions in the pathway cofactor biosynthesis; molybdopterin biosynthesis. Catalyzes the conversion of (8S)-3',8-cyclo-7,8-dihydroguanosine 5'-triphosphate to cyclic pyranopterin monophosphate (cPMP). The chain is Cyclic pyranopterin monophosphate synthase from Clostridium perfringens (strain SM101 / Type A).